The primary structure comprises 185 residues: Peptidyl-tRNA hydrolase (185 aa).

Phe12 serves as a coordination point for tRNA. His17 functions as the Proton acceptor in the catalytic mechanism. 3 residues coordinate tRNA: Tyr61, Asn63, and Asn109.

This sequence belongs to the PTH family. As to quaternary structure, monomer.

It localises to the cytoplasm. The catalysed reaction is an N-acyl-L-alpha-aminoacyl-tRNA + H2O = an N-acyl-L-amino acid + a tRNA + H(+). Functionally, hydrolyzes ribosome-free peptidyl-tRNAs (with 1 or more amino acids incorporated), which drop off the ribosome during protein synthesis, or as a result of ribosome stalling. In terms of biological role, catalyzes the release of premature peptidyl moieties from peptidyl-tRNA molecules trapped in stalled 50S ribosomal subunits, and thus maintains levels of free tRNAs and 50S ribosomes. The polypeptide is Peptidyl-tRNA hydrolase (Borrelia garinii subsp. bavariensis (strain ATCC BAA-2496 / DSM 23469 / PBi) (Borreliella bavariensis)).